Consider the following 326-residue polypeptide: PDZ domain-containing protein MAGIX (326 aa).

The disordered stretch occupies residues 1 to 32; the sequence is MDSHAGNTADPRGSRRGVGLQGSGSPRARQLL. One can recognise a PDZ domain in the interval 128 to 212; the sequence is SVELVRGPAG…RLCLVLQRPQ (85 aa). Residues 214–267 are disordered; it reads MNGSRSKEVGGGHQKTDRIPDPRGGRMMESRGTISPVHHRPKTRTGPGPSPESV. Positions 218-242 are enriched in basic and acidic residues; sequence RSKEVGGGHQKTDRIPDPRGGRMME. A Phosphoserine modification is found at serine 263.

The polypeptide is PDZ domain-containing protein MAGIX (Magix) (Rattus norvegicus (Rat)).